The following is a 1047-amino-acid chain: Cation efflux system protein CusA (1047 aa).

The next 12 membrane-spanning stretches (helical) occupy residues Phe-14–Thr-34, Leu-338–Trp-358, Ala-363–Phe-383, Met-391–Ile-411, Val-446–Thr-466, Ala-485–Ile-505, Val-532–Trp-552, Lys-871–Phe-891, Leu-898–Met-918, Thr-928–Leu-948, Ala-985–Gly-1005, and Ile-1012–Pro-1032.

Belongs to the resistance-nodulation-cell division (RND) (TC 2.A.6) family. As to quaternary structure, the cus efflux system is composed of CusA, CusB, CusC and CusF.

The protein localises to the cell inner membrane. Part of a cation efflux system that mediates resistance to copper and silver. In Escherichia coli (strain K12), this protein is Cation efflux system protein CusA (cusA).